The following is a 562-amino-acid chain: Solute carrier family 40 member 1 (562 aa).

The Cytoplasmic segment spans residues 1–20 (MDSPASKKPRCERFREFFKS). Residues 21-50 (AKFLIYVGHALSTWGDRMWNFAVAVFLVEL) form a helical membrane-spanning segment. Aspartate 36 serves as a coordination point for Fe cation. The Extracellular segment spans residues 51–54 (YGNS). Residues 55–81 (LLLTAVYGLVVAGSVLLLGAIIGDWVD) form a helical membrane-spanning segment. Residues 82-84 (KNP) lie on the Cytoplasmic side of the membrane. Residues 85-115 (RLKVAQTSLVVQNSAVILCGALLMAVFQFKQ) traverse the membrane as a helical segment. At 116–123 (QLSSMYDG) the chain is on the extracellular side. The helical transmembrane segment at 124-159 (WLLTTCYIMVISIANIANLASTAMSITIQRDWVVVV) threads the bilayer. The Cytoplasmic segment spans residues 160-161 (AG). Residues 162–192 (DDRSKLADMNATVRIIDQLTNILAPMLVGQI) form a helical membrane-spanning segment. The Extracellular segment spans residues 193–199 (MAFGSHF). Residues 200 to 226 (IGCGFISGWNLFSMCLEYFLLWKVYQK) form a helical membrane-spanning segment. Residues 227–300 (TPALAFKAGQ…DGWVAYYNQS (74 aa)) lie on the Cytoplasmic side of the membrane. Residues 301-327 (IFFAGMSLAFLYMTVLGFDCITTGYAY) traverse the membrane as a helical segment. Position 320 (cysteine 320) interacts with Fe cation. Topologically, residues 328-332 (TQGLN) are extracellular. A helical membrane pass occupies residues 333-360 (GSVLSLLMGASAVSGICGTVAFTWIRKK). The Cytoplasmic segment spans residues 361-362 (CG). Residues 363–385 (LIRTGFIAGVTQLSCLTLCVASV) traverse the membrane as a helical segment. Residues 386-444 (FAPGSPFDLSVSPFEEVLRHLFGDSGSLRESPTFIPTTEPPIQANVTVFEEAPPVESYM) lie on the Extracellular side of the membrane. Residues 445–474 (SVGLLFAGVIAARVGLWSFDLTVTQLIQEN) form a helical membrane-spanning segment. Over 475 to 479 (VIESE) the chain is Cytoplasmic. The helical transmembrane segment at 480-504 (RGVINGVQNSMNYLLDLLHFIMVIL) threads the bilayer. Histidine 498 lines the Fe cation pocket. Topologically, residues 505–507 (APN) are extracellular. A helical transmembrane segment spans residues 508-533 (PEAFGLLVIISVSFVAMGHMMYFRFA). Over 534–562 (YKSLGSRLFLFCSPEQKPDPNIPSLPNSV) the chain is Cytoplasmic.

The protein belongs to the ferroportin (FP) (TC 2.A.100) family. SLC40A subfamily. Expressed in the yolk sac and placenta.

It localises to the cell membrane. Its subcellular location is the basolateral cell membrane. The catalysed reaction is Fe(2+)(in) = Fe(2+)(out). In terms of biological role, transports Fe(2+) from the inside of a cell to the outside of the cell, playing a key role for maintaining systemic iron homeostasis. May be involved in transfer of Fe(2+) between maternal and fetal circulation. This Danio rerio (Zebrafish) protein is Solute carrier family 40 member 1 (slc40a1).